The sequence spans 159 residues: Transcription elongation factor GreA (159 aa).

Residues Ala47–Ala73 adopt a coiled-coil conformation.

Belongs to the GreA/GreB family.

Its function is as follows. Necessary for efficient RNA polymerase transcription elongation past template-encoded arresting sites. The arresting sites in DNA have the property of trapping a certain fraction of elongating RNA polymerases that pass through, resulting in locked ternary complexes. Cleavage of the nascent transcript by cleavage factors such as GreA or GreB allows the resumption of elongation from the new 3'terminus. GreA releases sequences of 2 to 3 nucleotides. The polypeptide is Transcription elongation factor GreA (Chlorobium phaeobacteroides (strain DSM 266 / SMG 266 / 2430)).